The sequence spans 344 residues: Fructose-1,6-bisphosphatase, cytosolic (344 aa).

The Mg(2+) site is built by E71, E100, D121, L123, and D124. Substrate is bound by residues 124–127 (DGSS), N215, Y247, Y267, and K277. A Mg(2+)-binding site is contributed by E283.

Belongs to the FBPase class 1 family. The cofactor is Mg(2+).

It is found in the cytoplasm. The enzyme catalyses beta-D-fructose 1,6-bisphosphate + H2O = beta-D-fructose 6-phosphate + phosphate. The sequence is that of Fructose-1,6-bisphosphatase, cytosolic from Oryza coarctata (Wild rice).